A 167-amino-acid polypeptide reads, in one-letter code: Stress-related protein (167 aa).

It belongs to the REF/SRPP family.

Its function is as follows. Plays a role in plant defense. The polypeptide is Stress-related protein (SRP) (Phaseolus vulgaris (Kidney bean)).